The following is a 180-amino-acid chain: MITAEAASESTVPAVPGDTAATGVPEHEELVWPWKDAPIRELVQRIHQLQAERAQAFRRLEEGHRQYLSSGPPYDFPRYRSTVHEVTQVFAAASREVLAVEAELAGPRAQPLLASHVRSLQQLEETRLTTVALLQLMGTPELTGQEDSLQMHQLKMKVIKTMEAISEVLQDLRFDAESAE.

Residues 1–23 are disordered; that stretch reads MITAEAASESTVPAVPGDTAATG.

This chain is Required for excision 1-B domain-containing protein, found in Bos taurus (Bovine).